We begin with the raw amino-acid sequence, 285 residues long: Methyl-CpG-binding domain protein 3 (285 aa).

Residues 1 to 69 (MERKRWECPA…STFDFRTGKM (69 aa)) form the MBD domain. At S56 the chain carries Phosphoserine. K73 participates in a covalent cross-link: Glycyl lysine isopeptide (Lys-Gly) (interchain with G-Cter in SUMO2). S85 carries the phosphoserine modification. Residues K90 and K92 each participate in a glycyl lysine isopeptide (Lys-Gly) (interchain with G-Cter in SUMO2) cross-link. At S144 the chain carries Phosphoserine. Positions 221-279 (TDDDIRKQEELVQQVRKRLEEALMADMLAHVEELARDGEAPLDKACAEEEEEEEEEEEE) form a coiled coil. Basic and acidic residues predominate over residues 255-267 (ARDGEAPLDKACA). Positions 255 to 285 (ARDGEAPLDKACAEEEEEEEEEEEEPEPERV) are disordered. Residues 268–285 (EEEEEEEEEEEEPEPERV) show a composition bias toward acidic residues.

Heterodimer (via N-terminus) with MBD2. Component of the MeCP1 histone deacetylase complex. Component of the nucleosome remodeling and deacetylase (NuRD) repressor complex, composed of core proteins MTA1, MTA2, MTA3, RBBP4, RBBP7, HDAC1, HDAC2, MBD2, MBD3, and peripherally associated proteins CDK2AP1, CDK2AP2, GATAD2A, GATAD2B, CHD3, CHD4 and CHD5. The exact stoichiometry of the NuRD complex is unknown, and some subunits such as MBD2 and MBD3, GATAD2A and GATAD2B, and CHD3, CHD4 and CHD5 define mutually exclusive NuRD complexes. Interacts with MBD3L2 (via N-terminus); the interaction is direct. Interacts with BCL6. Interacts with CDK2AP1. Interacts with HDAC1. Interacts with MTA2. Interacts with DNMT1. Interacts with GATAD2A. Interacts with GATAD2B. Does not interact with PWWP2A. Does not interact with PWWP2B. In terms of tissue distribution, highly expressed in brain, heart, kidney, liver, lung, skeletal muscle, spleen and testis. Detected at lower levels in embryonic stem cells.

The protein localises to the nucleus. It localises to the chromosome. Functionally, acts as a component of the histone deacetylase NuRD complex which participates in the remodeling of chromatin. Acts as transcriptional repressor and plays a role in gene silencing. Does not bind methylated DNA by itself. Binds to a lesser degree DNA containing unmethylated CpG dinucleotides. Recruits histone deacetylases and DNA methyltransferases. This Mus musculus (Mouse) protein is Methyl-CpG-binding domain protein 3 (Mbd3).